An 880-amino-acid polypeptide reads, in one-letter code: Translation initiation factor IF-2 (880 aa).

7 stretches are compositionally biased toward basic and acidic residues: residues 34-43, 59-69, 82-94, 110-131, 167-181, 230-240, and 248-261; these read HMSSLDDKQV, TEKDSKNSSRK, RRRD…DNRH, NRRE…DLLN, KKVE…EKLE, QKEETKPTRKK, and EVPD…EHSD. A disordered region spans residues 34 to 297; that stretch reads HMSSLDDKQV…KERPLPETLV (264 aa). Residues 262–275 show a composition bias toward basic residues; the sequence is KARRRRNKKNKRIN. Over residues 276-292 the composition is skewed to basic and acidic residues; that stretch reads QSKEVKKQPTQRKERPL. One can recognise a tr-type G domain in the interval 381–550; the sequence is KRPPVVTIMG…LLQADVMELK (170 aa). Positions 390–397 are G1; sequence GHVDHGKT. 390-397 provides a ligand contact to GTP; sequence GHVDHGKT. The tract at residues 415-419 is G2; sequence GITQR. The G3 stretch occupies residues 436 to 439; that stretch reads DTPG. Residues 436–440 and 490–493 contribute to the GTP site; these read DTPGH and NKID. The interval 490–493 is G4; the sequence is NKID. A G5 region spans residues 526 to 528; the sequence is SAK.

This sequence belongs to the TRAFAC class translation factor GTPase superfamily. Classic translation factor GTPase family. IF-2 subfamily.

The protein localises to the cytoplasm. In terms of biological role, one of the essential components for the initiation of protein synthesis. Protects formylmethionyl-tRNA from spontaneous hydrolysis and promotes its binding to the 30S ribosomal subunits. Also involved in the hydrolysis of GTP during the formation of the 70S ribosomal complex. This chain is Translation initiation factor IF-2, found in Lactobacillus johnsonii (strain CNCM I-12250 / La1 / NCC 533).